A 142-amino-acid polypeptide reads, in one-letter code: Large ribosomal subunit protein uL13 (142 aa).

It belongs to the universal ribosomal protein uL13 family. Part of the 50S ribosomal subunit.

Its function is as follows. This protein is one of the early assembly proteins of the 50S ribosomal subunit, although it is not seen to bind rRNA by itself. It is important during the early stages of 50S assembly. This is Large ribosomal subunit protein uL13 from Methylococcus capsulatus (strain ATCC 33009 / NCIMB 11132 / Bath).